A 61-amino-acid polypeptide reads, in one-letter code: Large ribosomal subunit protein uL30 (61 aa).

Belongs to the universal ribosomal protein uL30 family. As to quaternary structure, part of the 50S ribosomal subunit.

The sequence is that of Large ribosomal subunit protein uL30 from Teredinibacter turnerae (strain ATCC 39867 / T7901).